A 307-amino-acid polypeptide reads, in one-letter code: UPF0282 protein PH1002 (307 aa).

It belongs to the UPF0282 family.

The protein is UPF0282 protein PH1002 of Pyrococcus horikoshii (strain ATCC 700860 / DSM 12428 / JCM 9974 / NBRC 100139 / OT-3).